The sequence spans 323 residues: Beta-ketoacyl-[acyl-carrier-protein] synthase III (323 aa).

Catalysis depends on residues cysteine 113 and histidine 250. The interval 251–255 (QANRR) is ACP-binding. The active site involves asparagine 280.

This sequence belongs to the thiolase-like superfamily. FabH family. As to quaternary structure, homodimer.

The protein localises to the cytoplasm. The catalysed reaction is malonyl-[ACP] + acetyl-CoA + H(+) = 3-oxobutanoyl-[ACP] + CO2 + CoA. Its pathway is lipid metabolism; fatty acid biosynthesis. Functionally, catalyzes the condensation reaction of fatty acid synthesis by the addition to an acyl acceptor of two carbons from malonyl-ACP. Catalyzes the first condensation reaction which initiates fatty acid synthesis and may therefore play a role in governing the total rate of fatty acid production. Possesses both acetoacetyl-ACP synthase and acetyl transacylase activities. Its substrate specificity determines the biosynthesis of branched-chain and/or straight-chain of fatty acids. This Allorhizobium ampelinum (strain ATCC BAA-846 / DSM 112012 / S4) (Agrobacterium vitis (strain S4)) protein is Beta-ketoacyl-[acyl-carrier-protein] synthase III.